The sequence spans 488 residues: Zinc metalloproteinase-disintegrin VMP-II (488 aa).

The N-terminal stretch at 1–20 (MIQVLLVTICLAVFPYQGSS) is a signal peptide. Positions 21–191 (IILESGNVND…KASQSNIPPE (171 aa)) are excised as a propeptide. The Peptidase M12B domain occupies 198–396 (RYIELVVVAD…STTRCLHNEP (199 aa)). Residues E201 and D285 each coordinate Ca(2+). N-linked (GlcNAc...) asparagine glycosylation occurs at N296. 3 disulfide bridges follow: C309–C391, C349–C373, and C351–C356. H334 is a Zn(2+) binding site. E335 is an active-site residue. The Zn(2+) site is built by H338 and H344. Ca(2+) is bound by residues C391, N394, N409, E413, E416, and D419. A Disintegrin domain is found at 404–488 (PPFCGNYFKE…ADCPRNGLYG (85 aa)). Intrachain disulfides connect C407–C426, C418–C436, C420–C431, C430–C453, C444–C450, C449–C474, and C462–C481. Residues 466-468 (RGD) carry the Cell attachment site motif.

It belongs to the venom metalloproteinase (M12B) family. P-II subfamily. P-IIb sub-subfamily. As to quaternary structure, homodimer; disulfide-linked (disintegrin). Requires Zn(2+) as cofactor. Expressed by the venom gland.

The protein resides in the secreted. In terms of biological role, zinc metalloproteinase-disintegrin VMP-II: inhibits ADP-induced platelet aggregation (probably by binding integrin alpha-IIb/beta-3 (ITGA2B/ITGB3)) and degrades fibrinogen. Functionally, recombinant disintegrin r-Cam-dis (413-488): this recombinant protein inhibits platelet adhesion to fibrinogen (IC(50) is 1 nM), inhibits collagen- (IC(50) is 18 nM) and ADP-induced (IC(50) is 6 nM) platelet aggregation, and also inhibits platelet function on clot retraction. May act by binding integrin alpha-IIb/beta-3 (ITGA2B/ITGB3). The sequence is that of Zinc metalloproteinase-disintegrin VMP-II from Crotalus adamanteus (Eastern diamondback rattlesnake).